The chain runs to 578 residues: Arginine--tRNA ligase (578 aa).

The 'HIGH' region motif lies at 123–133; sequence PNLAKEMHVGH.

Belongs to the class-I aminoacyl-tRNA synthetase family. As to quaternary structure, monomer.

The protein resides in the cytoplasm. The enzyme catalyses tRNA(Arg) + L-arginine + ATP = L-arginyl-tRNA(Arg) + AMP + diphosphate. In Hahella chejuensis (strain KCTC 2396), this protein is Arginine--tRNA ligase.